The sequence spans 176 residues: Lipoprotein signal peptidase (176 aa).

4 helical membrane-spanning segments follow: residues 11–31, 38–58, 76–96, and 101–121; these read AFVA…LDQL, ATMQ…VLVF, WFFT…MHQH, and LLPA…VDRL. Active-site residues include D128 and D146. Residues 139 to 159 traverse the membrane as a helical segment; the sequence is WPAFNLADSAITLGVGLMLWA.

The protein belongs to the peptidase A8 family.

It is found in the cell inner membrane. The catalysed reaction is Release of signal peptides from bacterial membrane prolipoproteins. Hydrolyzes -Xaa-Yaa-Zaa-|-(S,diacylglyceryl)Cys-, in which Xaa is hydrophobic (preferably Leu), and Yaa (Ala or Ser) and Zaa (Gly or Ala) have small, neutral side chains.. It participates in protein modification; lipoprotein biosynthesis (signal peptide cleavage). This protein specifically catalyzes the removal of signal peptides from prolipoproteins. The polypeptide is Lipoprotein signal peptidase (Azoarcus sp. (strain BH72)).